A 447-amino-acid polypeptide reads, in one-letter code: Phosphoglucosamine mutase (447 aa).

Ser-88 acts as the Phosphoserine intermediate in catalysis. Mg(2+) contacts are provided by Ser-88, Asp-231, Asp-233, and Asp-235. Ser-88 bears the Phosphoserine mark.

Belongs to the phosphohexose mutase family. The cofactor is Mg(2+). Post-translationally, activated by phosphorylation.

The enzyme catalyses alpha-D-glucosamine 1-phosphate = D-glucosamine 6-phosphate. Catalyzes the conversion of glucosamine-6-phosphate to glucosamine-1-phosphate. This chain is Phosphoglucosamine mutase, found in Methanococcus maripaludis (strain C7 / ATCC BAA-1331).